Reading from the N-terminus, the 478-residue chain is Ankyrin repeat and BTB/POZ domain-containing protein 1 (478 aa).

2 ANK repeats span residues 1 to 31 and 35 to 64; these read MDTS…EVNV and WDST…RCEA. 2 consecutive BTB domains span residues 115-182 and 272-346; these read SDVV…DIGV and PDIC…ELSP. A coiled-coil region spans residues 451-477; the sequence is VQTYSAIEEAQQRLRALEDLLVSIGLD.

As to expression, ubiquitously expressed in all fetal tissues examined including heart, brain, liver, and kidney. Also expressed at lower levels in both adult heart and hypertrophic heart.

Its subcellular location is the cytoplasm. Its function is as follows. May act as a mediator of the PTEN growth-suppressive signaling pathway. May play a role in developmental processes. The chain is Ankyrin repeat and BTB/POZ domain-containing protein 1 from Homo sapiens (Human).